A 182-amino-acid chain; its full sequence is Isopentenyl-diphosphate Delta-isomerase (182 aa).

Mn(2+) contacts are provided by His-25 and His-32. The active site involves Cys-67. A Mn(2+)-binding site is contributed by His-69. Residue Glu-87 coordinates Mg(2+). Glu-114 and Glu-116 together coordinate Mn(2+). Glu-116 is a catalytic residue.

Belongs to the IPP isomerase type 1 family. In terms of assembly, homodimer. The cofactor is Mg(2+). Mn(2+) is required as a cofactor.

Its subcellular location is the cytoplasm. It carries out the reaction isopentenyl diphosphate = dimethylallyl diphosphate. Its pathway is isoprenoid biosynthesis; dimethylallyl diphosphate biosynthesis; dimethylallyl diphosphate from isopentenyl diphosphate: step 1/1. In terms of biological role, catalyzes the 1,3-allylic rearrangement of the homoallylic substrate isopentenyl (IPP) to its highly electrophilic allylic isomer, dimethylallyl diphosphate (DMAPP). The protein is Isopentenyl-diphosphate Delta-isomerase of Escherichia coli (strain K12 / MC4100 / BW2952).